Consider the following 141-residue polypeptide: Transcription antitermination protein NusB (141 aa).

Belongs to the NusB family.

Its function is as follows. Involved in transcription antitermination. Required for transcription of ribosomal RNA (rRNA) genes. Binds specifically to the boxA antiterminator sequence of the ribosomal RNA (rrn) operons. The chain is Transcription antitermination protein NusB from Neisseria meningitidis serogroup C (strain 053442).